We begin with the raw amino-acid sequence, 79 residues long: Large ribosomal subunit protein uL29 (79 aa).

Belongs to the universal ribosomal protein uL29 family.

The chain is Large ribosomal subunit protein uL29 from Tropheryma whipplei (strain Twist) (Whipple's bacillus).